The following is a 1451-amino-acid chain: DNA polymerase III PolC-type (1451 aa).

The Exonuclease domain maps to 416–575; sequence FVIFDIETTG…YDTEALKKVF (160 aa).

It belongs to the DNA polymerase type-C family. PolC subfamily.

It is found in the cytoplasm. The enzyme catalyses DNA(n) + a 2'-deoxyribonucleoside 5'-triphosphate = DNA(n+1) + diphosphate. Functionally, required for replicative DNA synthesis. This DNA polymerase also exhibits 3' to 5' exonuclease activity. The chain is DNA polymerase III PolC-type from Mycoplasma genitalium (strain ATCC 33530 / DSM 19775 / NCTC 10195 / G37) (Mycoplasmoides genitalium).